Consider the following 138-residue polypeptide: Basic phospholipase A2 trimucrotoxin (138 aa).

Positions 1 to 16 (MRTLWIVAVLLLGVEG) are cleaved as a signal peptide. 7 cysteine pairs are disulfide-bonded: Cys-42-Cys-131, Cys-44-Cys-60, Cys-59-Cys-111, Cys-65-Cys-138, Cys-66-Cys-104, Cys-73-Cys-97, and Cys-91-Cys-102. Ca(2+)-binding residues include Tyr-43, Gly-45, and Gly-47. The active site involves His-63. Residue Asp-64 participates in Ca(2+) binding. Asp-105 is an active-site residue.

Belongs to the phospholipase A2 family. Group II subfamily. D49 sub-subfamily. Homodimer. The cofactor is Ca(2+). In terms of tissue distribution, expressed by the venom gland.

The protein resides in the secreted. The enzyme catalyses a 1,2-diacyl-sn-glycero-3-phosphocholine + H2O = a 1-acyl-sn-glycero-3-phosphocholine + a fatty acid + H(+). In terms of biological role, snake venom phospholipase A2 (PLA2) that displays edema-inducing activities, as well as presynaptic neurotoxicity and low myotoxicity. PLA2 catalyzes the calcium-dependent hydrolysis of the 2-acyl groups in 3-sn-phosphoglycerides. The polypeptide is Basic phospholipase A2 trimucrotoxin (Protobothrops mucrosquamatus (Taiwan habu)).